Reading from the N-terminus, the 123-residue chain is MILGLGIDIVEVSRLEKWLNDKKLLERFFNKEELEYVLSKRDGAAPSLAVRFAAKEAFGKALGTGLAGIELKDIAVANDKTGRPFLELFGTALQALKEKGGASIHLSLTHEKTTAAAVVIIEG.

Aspartate 8 and glutamate 56 together coordinate Mg(2+).

It belongs to the P-Pant transferase superfamily. AcpS family. Requires Mg(2+) as cofactor.

It localises to the cytoplasm. It carries out the reaction apo-[ACP] + CoA = holo-[ACP] + adenosine 3',5'-bisphosphate + H(+). Its function is as follows. Transfers the 4'-phosphopantetheine moiety from coenzyme A to a Ser of acyl-carrier-protein. In Treponema denticola (strain ATCC 35405 / DSM 14222 / CIP 103919 / JCM 8153 / KCTC 15104), this protein is Holo-[acyl-carrier-protein] synthase.